An 816-amino-acid chain; its full sequence is MGNYSTAIDKKWQDKWAESGLYKFDPNKEVEKLYVLEMFSYPSGSQLHAGHWFNYGPVDSWARFKRMQGYNVFQPMGFDAFGLPAENFAIKTGIHPQDSTIKNIAKMEEQLKAMGAMFNWENEVVTCSPEYYKWTQWLFLKLYEKGLAYRKKAPVNWCPSCQTVLANEQVVDGACERCSTEVTKKDLTQWFFKITDYADELLDKLDGLDWPEKTVSMQKHWIGRSTGSQVNFKVKDSDLNFDVFTTRVDTLCGVSYVVLAPENPLVDEIVSAEQKEAVENYKEEAKKQSDIERQSISREKTGVFTGAYAIHPLTGKEVPIWVGDYVLATYGTGAVMAVPAHDERDFAFAEKFNLPINRVIEAKDGSETNLPFCEHGILVNSGEFDGLTTDEAKEKIVEKLASMGLGEKKVNFRLRDWLVSRQRYWGAPIPVVYCEECGIVPVPESQLPVELPYDVEFAPDGKSPLAKSEAFVNTTCPHCGKPAKRETDTLDTFVCSSWYYLRYPDNKNTEAPFNPELINKMLPVDKYVGGPEHACMHLLYARFITKALRDMGYLNFDEPFTSLTHQGLILGPDGLKMSKSKGNTISPDDYIKEYGADVFRMYLMFGFAYTEGGAWSDDGIKSVNRFVERIERIIDTAREAISKGENNKTTMDKAEKELNYWRHNTIKSVTDDTDKLQFNTAIARMMEFINALSKYTQEKEMNLDFLKDVVSDYLRLLAPFAPHFSEEQWNLLGNSYSIFNEAWPKFDPKALVKDEVEIAIQVNGKIKNKIMVSSDLDEEGIKAAALADEKIIASTEGKTVVKVIVIKGRLVNIVVK.

A 'HIGH' region motif is present at residues 40 to 51 (SYPSGSQLHAGH). Positions 576-580 (KMSKS) match the 'KMSKS' region motif. Lys-579 contributes to the ATP binding site.

The protein belongs to the class-I aminoacyl-tRNA synthetase family.

Its subcellular location is the cytoplasm. The catalysed reaction is tRNA(Leu) + L-leucine + ATP = L-leucyl-tRNA(Leu) + AMP + diphosphate. The chain is Leucine--tRNA ligase from Clostridium perfringens (strain SM101 / Type A).